We begin with the raw amino-acid sequence, 416 residues long: Gamma-glutamyl phosphate reductase (416 aa).

It belongs to the gamma-glutamyl phosphate reductase family.

It is found in the cytoplasm. The catalysed reaction is L-glutamate 5-semialdehyde + phosphate + NADP(+) = L-glutamyl 5-phosphate + NADPH + H(+). The protein operates within amino-acid biosynthesis; L-proline biosynthesis; L-glutamate 5-semialdehyde from L-glutamate: step 2/2. In terms of biological role, catalyzes the NADPH-dependent reduction of L-glutamate 5-phosphate into L-glutamate 5-semialdehyde and phosphate. The product spontaneously undergoes cyclization to form 1-pyrroline-5-carboxylate. The polypeptide is Gamma-glutamyl phosphate reductase (Streptococcus pyogenes serotype M49 (strain NZ131)).